The chain runs to 102 residues: Large ribosomal subunit protein uL24 (102 aa).

Belongs to the universal ribosomal protein uL24 family. In terms of assembly, part of the 50S ribosomal subunit.

Functionally, one of two assembly initiator proteins, it binds directly to the 5'-end of the 23S rRNA, where it nucleates assembly of the 50S subunit. One of the proteins that surrounds the polypeptide exit tunnel on the outside of the subunit. The polypeptide is Large ribosomal subunit protein uL24 (Paraburkholderia phytofirmans (strain DSM 17436 / LMG 22146 / PsJN) (Burkholderia phytofirmans)).